The primary structure comprises 308 residues: Methionyl-tRNA formyltransferase (308 aa).

S110–P113 lines the (6S)-5,6,7,8-tetrahydrofolate pocket.

It belongs to the Fmt family.

It catalyses the reaction L-methionyl-tRNA(fMet) + (6R)-10-formyltetrahydrofolate = N-formyl-L-methionyl-tRNA(fMet) + (6S)-5,6,7,8-tetrahydrofolate + H(+). Attaches a formyl group to the free amino group of methionyl-tRNA(fMet). The formyl group appears to play a dual role in the initiator identity of N-formylmethionyl-tRNA by promoting its recognition by IF2 and preventing the misappropriation of this tRNA by the elongation apparatus. In Neisseria meningitidis serogroup B (strain ATCC BAA-335 / MC58), this protein is Methionyl-tRNA formyltransferase.